The chain runs to 227 residues: MSDPFGSPFPSLHDQNLNAQHAMASDHRLANAASYQSYQRQRQMTLGDLLLENRIVFMQGEIHYANANEIVMKLLYLQSENRRKDIHLYINSPGGSVTATLAIYDTMQMLSCPVATYCVGEACSGAAVLLIGGAKGKRFCLPNSRVMMHQPLGGVSGQVSDIEIQAAEMFRYRDKLNEIISSHCGKSVEQIAKDTDRDFFLDAQQAKEYGLVDDLLLGTPASEEDED.

The active-site Nucleophile is the Ser124. Residue His149 is part of the active site.

This sequence belongs to the peptidase S14 family. In terms of assembly, fourteen ClpP subunits assemble into 2 heptameric rings which stack back to back to give a disk-like structure with a central cavity, resembling the structure of eukaryotic proteasomes.

It localises to the cytoplasm. The catalysed reaction is Hydrolysis of proteins to small peptides in the presence of ATP and magnesium. alpha-casein is the usual test substrate. In the absence of ATP, only oligopeptides shorter than five residues are hydrolyzed (such as succinyl-Leu-Tyr-|-NHMec, and Leu-Tyr-Leu-|-Tyr-Trp, in which cleavage of the -Tyr-|-Leu- and -Tyr-|-Trp bonds also occurs).. In terms of biological role, cleaves peptides in various proteins in a process that requires ATP hydrolysis. Has a chymotrypsin-like activity. Plays a major role in the degradation of misfolded proteins. The sequence is that of ATP-dependent Clp protease proteolytic subunit 1 from Rhodopirellula baltica (strain DSM 10527 / NCIMB 13988 / SH1).